The chain runs to 1134 residues: MMS19 nucleotide excision repair protein homolog (1134 aa).

4 HEAT repeats span residues Q959–V998, L1002–Q1047, S1050–R1089, and Y1092–G1130.

Belongs to the MET18/MMS19 family. Part of a complex composed of AE7, CIA1, MMS19 and NAR1. Interacts with AE7.

It localises to the nucleus. The protein resides in the cytoplasm. May select specific target apoproteins to which a Fe-S cluster produced by the cytosolic iron-sulfur (Fe-S) protein assembly (CIA) pathway is transferred. The polypeptide is MMS19 nucleotide excision repair protein homolog (Arabidopsis thaliana (Mouse-ear cress)).